The following is an 896-amino-acid chain: Desmocollin-3 (896 aa).

An N-terminal signal peptide occupies residues 1-26; sequence MAAPGSGAPCAELCRQLLLTLVVFSF. Residues 27-134 constitute a propeptide that is removed on maturation; sequence ACEACKKEIF…KETVLRRSKR (108 aa). Cadherin domains lie at 135–242, 243–354, 355–471, 472–579, and 580–690; these read RWAP…HPIF, TEAV…LPTF, RQNA…GPEC, SPEV…EILQ, and DYLV…ILGK. Residues 135–690 lie on the Extracellular side of the membrane; sequence RWAPIPCSMQ…RRSADVILGK (556 aa). The N-linked (GlcNAc...) asparagine glycan is linked to asparagine 165. Asparagine 391, asparagine 546, and asparagine 629 each carry an N-linked (GlcNAc...) asparagine glycan. A helical membrane pass occupies residues 691–711; sequence WAILAILLGIALLFSILLTLV. At 712–896 the chain is on the cytoplasmic side; that stretch reads CGIVSARNKK…AALAKTCTKR (185 aa).

In terms of assembly, may form homodimers. Interacts with DSG1; there is evidence to suggest that the interaction promotes cell-cell adhesion of keratinocytes. As to expression, expressed in stratified epithelia only, such as the epidermis, tongue, esophagus and rumen (at protein level).

It localises to the cell membrane. The protein resides in the cell junction. It is found in the desmosome. The protein localises to the cytoplasm. In terms of biological role, a component of desmosome cell-cell junctions which are required for positive regulation of cellular adhesion. Required for cell-cell adhesion in the epidermis, as a result required for the maintenance of the dermal cohesion and the dermal barrier function. Required for cell-cell adhesion of epithelial cell layers surrounding the telogen hair club, as a result plays an important role in telogen hair shaft anchorage. Essential for successful completion of embryo compaction and embryo development. This Bos taurus (Bovine) protein is Desmocollin-3 (DSC3).